An 823-amino-acid polypeptide reads, in one-letter code: NAD-dependent histone deacetylase sirtuin-1 (823 aa).

Residues 41-67 (LASTSTEAEAEAEATATTTEPATSELA) show a composition bias toward low complexity. The disordered stretch occupies residues 41 to 146 (LASTSTEAEA…SSSNCSSSVE (106 aa)). Positions 72-95 (GEIKTKTLAAREEQEIGANLEHKT) are enriched in basic and acidic residues. A compositionally biased stretch (acidic residues) spans 104 to 137 (EDEDDEEEEEEDDEEEEEDDEEGITGTSNEDEDS). The region spanning 204–499 (KLASVNTFDD…LCCDESVLTE (296 aa)) is the Deacetylase sirtuin-type domain. NAD(+)-binding positions include 229–248 (GAGV…NGIY) and 313–316 (QNID). The Proton acceptor role is filled by H331. Residues C339, C342, C363, and C366 each contribute to the Zn(2+) site. NAD(+)-binding positions include 427–429 (GSS), 452–454 (NRE), and S469. Phosphoserine occurs at positions 618 and 621. The segment covering 698 to 707 (DYSDDDDEEE) has biased composition (acidic residues). Disordered regions lie at residues 698–722 (DYSD…GNVG) and 777–823 (IIEQ…LAAV). Positions 798 to 813 (PSEENKQQTQIERSEE) are enriched in basic and acidic residues. Residues 814–823 (SPPPGQLAAV) are compositionally biased toward pro residues.

Belongs to the sirtuin family. Class I subfamily. Interacts with the transcriptional repressors hairy (hry) and deadpan (dpn); via basic domains. Associates with the Esc/E(z) histone methyltransferase complex. Interacts directly with E(z) and HDAC1/Rpd3. Zn(2+) is required as a cofactor.

It localises to the cytoplasm. The protein resides in the nucleus. Its subcellular location is the chromosome. The catalysed reaction is N(6)-acetyl-L-lysyl-[protein] + NAD(+) + H2O = 2''-O-acetyl-ADP-D-ribose + nicotinamide + L-lysyl-[protein]. Functionally, NAD-dependent histone deacetylase involved in heterochromatic silencing. Mildly suppresses the heterochromatin-mediated silencing phenomenon known as position-effect variegation (PEV). Required for epigenetic silencing of the polycomb group proteins. Has histone H4 deacetylase activity in vitro. Required maternally for establishing proper segmentation of the embryo. Involved in sex determination. May be involved in the regulation of life span. The chain is NAD-dependent histone deacetylase sirtuin-1 from Drosophila melanogaster (Fruit fly).